The primary structure comprises 343 residues: Cytoplasmic tRNA 2-thiolation protein 1 (343 aa).

This sequence belongs to the TtcA family. CTU1/NCS6/ATPBD3 subfamily.

It is found in the cytoplasm. It functions in the pathway tRNA modification; 5-methoxycarbonylmethyl-2-thiouridine-tRNA biosynthesis. Functionally, plays a central role in 2-thiolation of mcm(5)S(2)U at tRNA wobble positions of tRNA(Lys), tRNA(Glu) and tRNA(Gln). Directly binds tRNAs and probably acts by catalyzing adenylation of tRNAs, an intermediate required for 2-thiolation. It is unclear whether it acts as a sulfurtransferase that transfers sulfur from thiocarboxylated URM1 onto the uridine of tRNAs at wobble position. The chain is Cytoplasmic tRNA 2-thiolation protein 1 from Drosophila melanogaster (Fruit fly).